The following is a 368-amino-acid chain: Phospho-N-acetylmuramoyl-pentapeptide-transferase (368 aa).

10 helical membrane-spanning segments follow: residues 2-22 (IALI…TPLL), 51-71 (TLGG…SALY), 80-100 (PTWA…LGFI), 116-136 (VGGK…LALI), 166-186 (IVAI…WTNA), 193-213 (LDGL…IIAM), 234-254 (PLDL…FLWY), 256-276 (CNPA…GLFA), 277-297 (ALSI…LFVV), and 340-360 (FWIV…GNWV).

This sequence belongs to the glycosyltransferase 4 family. MraY subfamily. Requires Mg(2+) as cofactor.

The protein localises to the cell membrane. It catalyses the reaction UDP-N-acetyl-alpha-D-muramoyl-L-alanyl-gamma-D-glutamyl-meso-2,6-diaminopimeloyl-D-alanyl-D-alanine + di-trans,octa-cis-undecaprenyl phosphate = di-trans,octa-cis-undecaprenyl diphospho-N-acetyl-alpha-D-muramoyl-L-alanyl-D-glutamyl-meso-2,6-diaminopimeloyl-D-alanyl-D-alanine + UMP. The protein operates within cell wall biogenesis; peptidoglycan biosynthesis. Functionally, catalyzes the initial step of the lipid cycle reactions in the biosynthesis of the cell wall peptidoglycan: transfers peptidoglycan precursor phospho-MurNAc-pentapeptide from UDP-MurNAc-pentapeptide onto the lipid carrier undecaprenyl phosphate, yielding undecaprenyl-pyrophosphoryl-MurNAc-pentapeptide, known as lipid I. This chain is Phospho-N-acetylmuramoyl-pentapeptide-transferase, found in Bifidobacterium animalis subsp. lactis (strain AD011).